Consider the following 85-residue polypeptide: Small ribosomal subunit protein uS17 (85 aa).

Belongs to the universal ribosomal protein uS17 family. In terms of assembly, part of the 30S ribosomal subunit.

Its function is as follows. One of the primary rRNA binding proteins, it binds specifically to the 5'-end of 16S ribosomal RNA. This Syntrophus aciditrophicus (strain SB) protein is Small ribosomal subunit protein uS17.